Consider the following 178-residue polypeptide: Caveolin-1 (178 aa).

An N-acetylserine modification is found at Ser-2. Residue Ser-2 is modified to Phosphoserine. The segment at 2 to 94 is required for homooligomerization; that stretch reads SGGKYVDSEG…WKASFTTFTV (93 aa). The Cytoplasmic portion of the chain corresponds to 2–104; it reads SGGKYVDSEG…TKYWFYRLLS (103 aa). Lys-5 carries the post-translational modification N6-acetyllysine; alternate. Lys-5 is covalently cross-linked (Glycyl lysine isopeptide (Lys-Gly) (interchain with G-Cter in ubiquitin); alternate). The residue at position 6 (Tyr-6) is a Phosphotyrosine. Residue Ser-9 is modified to Phosphoserine. Position 14 is a phosphotyrosine; by ABL1 (Tyr-14). Tyr-25 carries the phosphotyrosine modification. Glycyl lysine isopeptide (Lys-Gly) (interchain with G-Cter in ubiquitin) cross-links involve residues Lys-26, Lys-30, Lys-39, Lys-47, and Lys-57. Positions 82-94 are interaction with CAVIN3; sequence DGIWKASFTTFTV. An intramembrane region (helical) is located at residues 105–125; sequence ALFGIPMALIWGIYFAILSFL. Over 126–178 the chain is Cytoplasmic; that stretch reads HIWAVVPCIKSFLIEIQCISRVYSIYVHTFCDPLFEAIGKIFSNIRINMQKEI. An interacts with SPRY1, SPRY2, SPRY3 and SPRY4 region spans residues 131 to 142; sequence VPCIKSFLIEIQ. S-palmitoyl cysteine attachment occurs at residues Cys-133, Cys-143, and Cys-156. Residues 149–160 are interacts with SPRY1, SPRY2, and SPRY4; it reads SIYVHTFCDPLF. The interacts with SPRY1, SPRY2, SPRY3 and SPRY4 stretch occupies residues 167 to 178; sequence FSNIRINMQKEI.

This sequence belongs to the caveolin family. As to quaternary structure, homooligomer. Interacts with GLIPR2. Interacts with NOSTRIN. Interacts with SNAP25 and STX1A. Interacts (via the N-terminus) with DPP4; the interaction is direct. Interacts with CTNNB1, CDH1 and JUP. Interacts with PACSIN2; this interaction induces membrane tubulation. Interacts with SLC7A9. Interacts with BMX and BTK. Interacts with TGFBR1. Interacts with CAVIN3 (via leucine-zipper domain) in a cholesterol-sensitive manner. Interacts with CAVIN1. Interacts with EHD2 in a cholesterol-dependent manner. Forms a ternary complex with UBXN6 and VCP; mediates CAV1 targeting to lysosomes for degradation. Interacts with ABCG1; this interaction regulates ABCG1-mediated cholesterol efflux. Interacts with NEU3; this interaction enhances NEU3 sialidase activity within caveola. Interacts (via C-terminus) with SPRY1, SPRY2 (via C-terminus), SPRY3, and SPRY4. Interacts with IGFBP5; this interaction allows trafficking of IGFBP5 from the plasma membrane to the nucleus. In terms of processing, phosphorylated at Tyr-14 by ABL1 in response to oxidative stress. Ubiquitinated. Undergo monoubiquitination and multi- and/or polyubiquitination. Monoubiquitination of N-terminal lysines promotes integration in a ternary complex with UBXN6 and VCP which promotes oligomeric CAV1 targeting to lysosomes for degradation. Ubiquitinated by ZNRF1; leading to degradation and modulation of the TLR4-mediated immune response.

The protein localises to the golgi apparatus membrane. It localises to the cell membrane. It is found in the membrane. Its subcellular location is the caveola. The protein resides in the membrane raft. Functionally, may act as a scaffolding protein within caveolar membranes. Forms a stable heterooligomeric complex with CAV2 that targets to lipid rafts and drives caveolae formation. Mediates the recruitment of CAVIN proteins (CAVIN1/2/3/4) to the caveolae. Interacts directly with G-protein alpha subunits and can functionally regulate their activity. Involved in the costimulatory signal essential for T-cell receptor (TCR)-mediated T-cell activation. Its binding to DPP4 induces T-cell proliferation and NF-kappa-B activation in a T-cell receptor/CD3-dependent manner. Recruits CTNNB1 to caveolar membranes and may regulate CTNNB1-mediated signaling through the Wnt pathway. Negatively regulates TGFB1-mediated activation of SMAD2/3 by mediating the internalization of TGFBR1 from membrane rafts leading to its subsequent degradation. Binds 20(S)-hydroxycholesterol (20(S)-OHC). This is Caveolin-1 (CAV1) from Muntiacus reevesi (Reeves' muntjac).